We begin with the raw amino-acid sequence, 404 residues long: Glucoside xylosyltransferase 1 (404 aa).

Residues 1–6 (MRRYLR) are Cytoplasmic-facing. Residues 7–29 (VVGLCLACGFCSLLYAFSQLAVS) traverse the membrane as a helical; Signal-anchor for type II membrane protein segment. At 30-404 (LEEGAAGGRR…NRYDTPPKER (375 aa)) the chain is on the lumenal side. Residue N201 is glycosylated (N-linked (GlcNAc...) asparagine).

The protein belongs to the glycosyltransferase 8 family.

Its subcellular location is the membrane. It catalyses the reaction 3-O-(beta-D-glucosyl)-L-seryl-[EGF-like domain protein] + UDP-alpha-D-xylose = 3-O-[alpha-D-xylosyl-(1-&gt;3)-beta-D-glucosyl]-L-seryl-[EGF-like domain protein] + UDP + H(+). In terms of biological role, glycosyltransferase which elongates the O-linked glucose attached to EGF-like repeats in the extracellular domain of Notch proteins by catalyzing the addition of xylose. In Mus musculus (Mouse), this protein is Glucoside xylosyltransferase 1 (Gxylt1).